The sequence spans 203 residues: Glycerol-3-phosphate acyltransferase (203 aa).

4 helical membrane-spanning segments follow: residues 7–27, 82–102, 118–138, and 141–161; these read TLLMILAAYLAGSISSAVLVC, AVSLGLIAIAACLGHIYPVFF, APIGDDLAICLMASWVVLLLI, and YSSLAAILTALLAPLYTWWLD.

Belongs to the PlsY family. In terms of assembly, probably interacts with PlsX.

Its subcellular location is the cell inner membrane. The catalysed reaction is an acyl phosphate + sn-glycerol 3-phosphate = a 1-acyl-sn-glycero-3-phosphate + phosphate. The protein operates within lipid metabolism; phospholipid metabolism. Catalyzes the transfer of an acyl group from acyl-phosphate (acyl-PO(4)) to glycerol-3-phosphate (G3P) to form lysophosphatidic acid (LPA). This enzyme utilizes acyl-phosphate as fatty acyl donor, but not acyl-CoA or acyl-ACP. This is Glycerol-3-phosphate acyltransferase from Shewanella baltica (strain OS223).